The chain runs to 212 residues: Mediator of RNA polymerase II transcription subunit 20 (212 aa).

Belongs to the Mediator complex subunit 20 family. Component of the Mediator complex, which is composed of MED1, MED4, MED6, MED7, MED8, MED9, MED10, MED11, MED12, MED13, MED13L, MED14, MED15, MED16, MED17, MED18, MED19, MED20, MED21, MED22, MED23, MED24, MED25, MED26, MED27, MED29, MED30, MED31, CCNC, CDK8 and CDC2L6/CDK11. The MED12, MED13, CCNC and CDK8 subunits form a distinct module termed the CDK8 module. Mediator containing the CDK8 module is less active than Mediator lacking this module in supporting transcriptional activation. Individual preparations of the Mediator complex lacking one or more distinct subunits have been variously termed ARC, CRSP, DRIP, PC2, SMCC and TRAP. Interacts with PPARG.

It is found in the nucleus. Functionally, component of the Mediator complex, a coactivator involved in the regulated transcription of nearly all RNA polymerase II-dependent genes. Mediator functions as a bridge to convey information from gene-specific regulatory proteins to the basal RNA polymerase II transcription machinery. Mediator is recruited to promoters by direct interactions with regulatory proteins and serves as a scaffold for the assembly of a functional preinitiation complex with RNA polymerase II and the general transcription factors. This Macaca fascicularis (Crab-eating macaque) protein is Mediator of RNA polymerase II transcription subunit 20 (MED20).